The sequence spans 509 residues: UDP-N-acetylmuramyl-tripeptide synthetase (509 aa).

S30 provides a ligand contact to UDP-N-acetyl-alpha-D-muramoyl-L-alanyl-D-glutamate. ATP is bound at residue 111-117 (GTDGKTT). Residues 155–156 (ST), T182, and R192 contribute to the UDP-N-acetyl-alpha-D-muramoyl-L-alanyl-D-glutamate site. K224 carries the N6-carboxylysine modification.

It belongs to the MurCDEF family. MurE subfamily. Post-translationally, carboxylation is probably crucial for Mg(2+) binding and, consequently, for the gamma-phosphate positioning of ATP.

The protein localises to the cytoplasm. The protein operates within cell wall biogenesis; peptidoglycan biosynthesis. In terms of biological role, catalyzes the addition of an amino acid to the nucleotide precursor UDP-N-acetylmuramoyl-L-alanyl-D-glutamate (UMAG) in the biosynthesis of bacterial cell-wall peptidoglycan. The chain is UDP-N-acetylmuramyl-tripeptide synthetase from Roseiflexus sp. (strain RS-1).